Here is a 296-residue protein sequence, read N- to C-terminus: tRNA dimethylallyltransferase (296 aa).

ATP is bound at residue 2–9 (GPTASGKT). Residue 4–9 (TASGKT) coordinates substrate. Interaction with substrate tRNA regions lie at residues 27 to 30 (DSAL), 151 to 155 (QRLSR), and 232 to 237 (RCVGYR).

It belongs to the IPP transferase family. In terms of assembly, monomer. It depends on Mg(2+) as a cofactor.

It catalyses the reaction adenosine(37) in tRNA + dimethylallyl diphosphate = N(6)-dimethylallyladenosine(37) in tRNA + diphosphate. In terms of biological role, catalyzes the transfer of a dimethylallyl group onto the adenine at position 37 in tRNAs that read codons beginning with uridine, leading to the formation of N6-(dimethylallyl)adenosine (i(6)A). The sequence is that of tRNA dimethylallyltransferase from Shewanella baltica (strain OS155 / ATCC BAA-1091).